The chain runs to 281 residues: Undecaprenyl-diphosphatase (281 aa).

7 consecutive transmembrane segments (helical) span residues 45–65 (AFTN…VVVI), 86–106 (WQLW…GLIF), 114–134 (FQNF…FIYV), 148–168 (LVSL…LSLI), 196–216 (FFLG…KFIV), 224–244 (SQLF…LYVI), and 256–276 (FTFF…YGLM).

Belongs to the UppP family.

It localises to the cell membrane. It carries out the reaction di-trans,octa-cis-undecaprenyl diphosphate + H2O = di-trans,octa-cis-undecaprenyl phosphate + phosphate + H(+). In terms of biological role, catalyzes the dephosphorylation of undecaprenyl diphosphate (UPP). Confers resistance to bacitracin. The polypeptide is Undecaprenyl-diphosphatase (Streptococcus mutans serotype c (strain ATCC 700610 / UA159)).